The sequence spans 315 residues: N-acetyl-gamma-glutamyl-phosphate reductase (315 aa).

The active site involves Cys-117.

It belongs to the NAGSA dehydrogenase family. Type 2 subfamily.

It is found in the cytoplasm. It catalyses the reaction N-acetyl-L-glutamate 5-semialdehyde + phosphate + NADP(+) = N-acetyl-L-glutamyl 5-phosphate + NADPH + H(+). It participates in amino-acid biosynthesis; L-arginine biosynthesis; N(2)-acetyl-L-ornithine from L-glutamate: step 3/4. Catalyzes the NADPH-dependent reduction of N-acetyl-5-glutamyl phosphate to yield N-acetyl-L-glutamate 5-semialdehyde. The sequence is that of N-acetyl-gamma-glutamyl-phosphate reductase from Burkholderia ambifaria (strain ATCC BAA-244 / DSM 16087 / CCUG 44356 / LMG 19182 / AMMD) (Burkholderia cepacia (strain AMMD)).